The following is a 184-amino-acid chain: NADH-quinone oxidoreductase subunit B (184 aa).

4 residues coordinate [4Fe-4S] cluster: Cys37, Cys38, Cys103, and Cys132.

Belongs to the complex I 20 kDa subunit family. In terms of assembly, NDH-1 is composed of 14 different subunits. Subunits NuoB, C, D, E, F, and G constitute the peripheral sector of the complex. The cofactor is [4Fe-4S] cluster.

The protein resides in the cell membrane. It catalyses the reaction a quinone + NADH + 5 H(+)(in) = a quinol + NAD(+) + 4 H(+)(out). In terms of biological role, NDH-1 shuttles electrons from NADH, via FMN and iron-sulfur (Fe-S) centers, to quinones in the respiratory chain. The immediate electron acceptor for the enzyme in this species is believed to be a menaquinone. Couples the redox reaction to proton translocation (for every two electrons transferred, four hydrogen ions are translocated across the cytoplasmic membrane), and thus conserves the redox energy in a proton gradient. The polypeptide is NADH-quinone oxidoreductase subunit B (Rhodococcus erythropolis (strain PR4 / NBRC 100887)).